A 396-amino-acid polypeptide reads, in one-letter code: MMKTVNELIKDINSLTSHLHEKDFLLTWEQTPDELKQVLDVAAALKALRAENISTKVFNSGLGISVFRDNSTRTRFSYASALNLLGLAQQDLDEGKSQIAHGETVRETANMISFCADAIGIRDDMYLGAGNAYMREVGAALDDGYKQGVLPQRPALVNLQCDIDHPTQSMADLAWLREHFGSLENLKGKKIAMTWAYSPSYGKPLSVPQGIIGLMTRFGMDVTLAHPEGYDLIPDVVEVAKNNAKASGGSFRQVTSMEEAFKDADIVYPKSWAPYKVMEQRTELLRANDHEGLKALEKQCLAQNAQHKDWHCTEEMMELTRDGEALYMHCLPADISGVSCKEGEVTEGVFEKYRIATYKEASWKPYIIAAMILSRKYAKPGALLEQLLKEAQERVK.

Carbamoyl phosphate is bound by residues 71-74 (STRT), glutamine 98, 165-168 (HPTQ), and 330-331 (CL).

The protein belongs to the aspartate/ornithine carbamoyltransferase superfamily. In terms of assembly, homotrimer.

The sequence is that of Putative carbamoyltransferase YgeW (ygeW) from Escherichia coli O157:H7.